Reading from the N-terminus, the 496-residue chain is Myotilin (496 aa).

The segment at 1–37 is disordered; the sequence is MFNYERPKHFIQPQNPCGSRLQPPGPEVSGFPSQTKQ. Omega-N-methylarginine is present on Arg20. Residues 78 to 149 are necessary for interaction with ACTN1; sequence PNPGQKVTAT…PTPKTPDHEI (72 aa). Polar residues-rich tracts occupy residues 202–213 and 221–233; these read NSDVQDSPQHNP and PTSQVRSRSSSRA. The disordered stretch occupies residues 202–239; that stretch reads NSDVQDSPQHNPEQARLHVPTSQVRSRSSSRAEANDQD. The interval 213–491 is necessary for interaction with FLNC; that stretch reads PEQARLHVPT…QRLAAQSGLY (279 aa). Residues 213 to 496 are necessary for interaction with ACTA1; it reads PEQARLHVPT…QSGLYESEEL (284 aa). 2 consecutive Ig-like C2-type domains span residues 248–333 and 347–439; these read PRFI…ATFT and PMFI…LDVT.

This sequence belongs to the myotilin/palladin family. Homodimer. Interacts with ACTA1, ACTN1, FLNA, FLNB, FLNC, and MYOZ2. Interacts with the C-terminal region of MYOZ1. In terms of tissue distribution, expressed in skeletal muscle (at protein level).

The protein localises to the cell membrane. It is found in the sarcolemma. Its subcellular location is the cytoplasm. It localises to the cytoskeleton. The protein resides in the myofibril. The protein localises to the sarcomere. It is found in the z line. Its function is as follows. Component of a complex of multiple actin cross-linking proteins. Involved in the control of myofibril assembly and stability at the Z lines in muscle cells. The polypeptide is Myotilin (Myot) (Mus musculus (Mouse)).